A 2641-amino-acid chain; its full sequence is Inverse autotransporter adhesin YeeJ (2641 aa).

An N-terminal signal peptide occupies residues 1–25; that stretch reads MGIKLRRLTAGICLITQLVFPMAAA. The 49-residue stretch at 50-98 folds into the LysM domain; sequence VPYTLGALESAQSVAERFGISVAELRKLNQFRTFARGFDNVRQGDELDV. Positions 125-400 are inverse autotransporter; the sequence is TSQQIGSLLA…SRFDLVDRNN (276 aa). The tract at residues 513-605 is invasin 3 domain; the sequence is QKDSSVSLSS…GVDAAKAPAV (93 aa). Big-1 domains lie at 617–711, 721–815, 822–913, 920–1017, 1024–1116, 1123–1220, 1227–1319, 1326–1423, 1430–1523, 1531–1633, 1641–1734, 1741–1837, 1844–1941, 1948–2032, 2048–2141, 2142–2235, and 2244–2336; these read HSSI…AGFI, IATL…VSFV, QVDL…VIFI, ALTL…MTFV, VVVL…VNIA, QVTL…VTFV, LVVL…VHFI, IIEL…SINV, HLTL…VTYV, EISL…VNFI, QVNL…VTLI, KLAS…PTEV, ITSL…VIDQ, KLTL…IVKV, and VASF…ITLV. The C-type lectin domain stretch occupies residues 2538 to 2641; that stretch reads KSWWVNAGDA…FAYATCYKNL (104 aa).

Belongs to the intimin/invasin family.

It localises to the cell outer membrane. A probable inverse autotransporter, it may be involved in biofilm formation and cell adhesion. May bind peptidoglycan via its LysM domain. The protein is Inverse autotransporter adhesin YeeJ (yeeJ) of Escherichia coli O157:H7.